Here is a 270-residue protein sequence, read N- to C-terminus: NAD(P)H-hydrate epimerase (270 aa).

The YjeF N-terminal domain occupies 25–234 (FQQLMDLMQN…DLLAPEAIYQ (210 aa)). 73–77 (DNGGQ) is a (6S)-NADPHX binding site. K(+) contacts are provided by N74 and D144. Residues 148–154 (GVGLYGH) and E177 contribute to the (6S)-NADPHX site. T180 contacts K(+).

Belongs to the NnrE/AIBP family. K(+) is required as a cofactor.

It catalyses the reaction (6R)-NADHX = (6S)-NADHX. The enzyme catalyses (6R)-NADPHX = (6S)-NADPHX. Its function is as follows. Catalyzes the epimerization of the S- and R-forms of NAD(P)HX, a damaged form of NAD(P)H that is a result of enzymatic or heat-dependent hydration. This is a prerequisite for the S-specific NAD(P)H-hydrate dehydratase to allow the repair of both epimers of NAD(P)HX. The chain is NAD(P)H-hydrate epimerase from Legionella pneumophila (strain Corby).